The sequence spans 207 residues: MLYNIININILNSNILLDIISILSIISSIAIILVSNPMYSILYLIILFINIAIYLYLIGISIMSLLYILVYIGAIAVLFLFILSLFTALPYLLESKNLKITELNNTFLHKNNNIPLFILIIIIFYYNMINYFNNIYLNNNNINNNNINNLDNINNILLNNDWYKIFDINHLNQIGFLLYTEYSILLIFISFLLLFSILSAIVLTHNK.

5 helical membrane passes run 15 to 35, 40 to 60, 66 to 86, 116 to 136, and 184 to 204; these read ILLDIISILSIISSIAIILVS, SILYLIILFINIAIYLYLIGI, LYILVYIGAIAVLFLFILSLF, LFILIIIIFYYNMINYFNNIY, and ILLIFISFLLLFSILSAIVLT.

It belongs to the complex I subunit 6 family.

It is found in the mitochondrion membrane. It catalyses the reaction a ubiquinone + NADH + 5 H(+)(in) = a ubiquinol + NAD(+) + 4 H(+)(out). In terms of biological role, core subunit of the mitochondrial membrane respiratory chain NADH dehydrogenase (Complex I) that is believed to belong to the minimal assembly required for catalysis. Complex I functions in the transfer of electrons from NADH to the respiratory chain. The immediate electron acceptor for the enzyme is believed to be ubiquinone. In Wickerhamomyces canadensis (Yeast), this protein is NADH-ubiquinone oxidoreductase chain 6 (ND6).